We begin with the raw amino-acid sequence, 112 residues long: MAESFTTTNRYFDNKHYPRGFSRHGDFTIKEAQLLERHGYAFNELDLGKREPVTEEEKLFVAVCRGEREPVTEAERVWSKYMTRIKRPKRFHTLSGGKPQVEGAEDYTDSDD.

Positions 91-112 are disordered; it reads FHTLSGGKPQVEGAEDYTDSDD. A compositionally biased stretch (acidic residues) spans 103 to 112; it reads GAEDYTDSDD.

Belongs to the MaoP family.

In terms of biological role, involved in the organization of the Ori region of the chromosome into a macrodomain (MD). It constrains DNA mobility in the Ori macrodomain and limits long-distance DNA interactions with other chromosomal regions. In Escherichia coli O157:H7, this protein is Macrodomain Ori protein.